We begin with the raw amino-acid sequence, 109 residues long: Nucleoid-associated protein HAPS_1040 (109 aa).

The interval 1–21 (MFGKGGLGGLMKQAQQMQERM) is disordered. A compositionally biased stretch (low complexity) spans 10-19 (LMKQAQQMQE).

It belongs to the YbaB/EbfC family. Homodimer.

It is found in the cytoplasm. The protein localises to the nucleoid. In terms of biological role, binds to DNA and alters its conformation. May be involved in regulation of gene expression, nucleoid organization and DNA protection. In Glaesserella parasuis serovar 5 (strain SH0165) (Haemophilus parasuis), this protein is Nucleoid-associated protein HAPS_1040.